The following is a 549-amino-acid chain: Probable glucuronosyltransferase Os01g0157700 (549 aa).

Topologically, residues 1–16 (MDSEERSKKRLRLWSR) are cytoplasmic. Residues 17–37 (AVVHFSLCFAIGVFAALLPLA) form a helical; Signal-anchor for type II membrane protein membrane-spanning segment. Residues 38–549 (ATGATSIDSI…TPEEGKTKEG (512 aa)) lie on the Lumenal side of the membrane. 9 N-linked (GlcNAc...) asparagine glycosylation sites follow: Asn112, Asn139, Asn214, Asn229, Asn240, Asn251, Asn264, Asn269, and Asn300. The disordered stretch occupies residues 232–252 (ETTWDSSSNTTQTTWDSSSNK). Positions 350–363 (IEQATPEKESLTKG) are enriched in basic and acidic residues. Disordered regions lie at residues 350–371 (IEQATPEKESLTKGDEEESHDM), 413–432 (EQETPEKENLTKGEEKESHD), and 441–524 (KIEE…KETH). 2 N-linked (GlcNAc...) asparagine glycosylation sites follow: Asn421 and Asn452. Basic and acidic residues-rich tracts occupy residues 441–465 (KIEEQETPEKENLTKGDEKESHDMM), 472–496 (KIDEQETTEKESLTKGDEKESHDMM), and 503–524 (KIEEQETPEKESLTKGDEKETH).

This sequence belongs to the glycosyltransferase 43 family.

The protein localises to the golgi apparatus membrane. Its function is as follows. Involved in the synthesis of glucuronoxylan hemicellulose in secondary cell walls. The polypeptide is Probable glucuronosyltransferase Os01g0157700 (Oryza sativa subsp. japonica (Rice)).